The chain runs to 369 residues: Phenylalanine--tRNA ligase alpha subunit (369 aa).

Glu-269 is a Mg(2+) binding site.

Belongs to the class-II aminoacyl-tRNA synthetase family. Phe-tRNA synthetase alpha subunit type 1 subfamily. In terms of assembly, tetramer of two alpha and two beta subunits. The cofactor is Mg(2+).

Its subcellular location is the cytoplasm. It catalyses the reaction tRNA(Phe) + L-phenylalanine + ATP = L-phenylalanyl-tRNA(Phe) + AMP + diphosphate + H(+). This chain is Phenylalanine--tRNA ligase alpha subunit, found in Nitrobacter winogradskyi (strain ATCC 25391 / DSM 10237 / CIP 104748 / NCIMB 11846 / Nb-255).